A 162-amino-acid polypeptide reads, in one-letter code: Lymphocyte antigen 86 (162 aa).

A signal peptide spans 1–20 (MKGFTATLFLWTLIFPSCSG). 3 cysteine pairs are disulfide-bonded: Cys33–Cys58, Cys45–Cys154, and Cys102–Cys112. Residue Asn96 is glycosylated (N-linked (GlcNAc...) asparagine). Asn156 is a glycosylation site (N-linked (GlcNAc...) asparagine).

M-shaped tetramer of two CD180-LY86 heterodimers. Highly expressed in B-cells, monocytes and tonsil.

Its subcellular location is the secreted. It localises to the extracellular space. In terms of biological role, may cooperate with CD180 and TLR4 to mediate the innate immune response to bacterial lipopolysaccharide (LPS) and cytokine production. Important for efficient CD180 cell surface expression. In Homo sapiens (Human), this protein is Lymphocyte antigen 86 (LY86).